The following is a 1097-amino-acid chain: Leukemia inhibitory factor receptor (1097 aa).

The N-terminal stretch at 1-44 (MMNISLRLRRPPWMVDSNGRRMTSHFQWLLLTFILLYLMNQVTS) is a signal peptide. Residues 45-833 (EKRGAPRDLK…SMFVVTKENS (789 aa)) lie on the Extracellular side of the membrane. The region spanning 46–131 (KRGAPRDLKC…ISKFTLNEKN (86 aa)) is the Fibronectin type-III 1 domain. 2 disulfides stabilise this stretch: cysteine 55-cysteine 65 and cysteine 82-cysteine 90. Asparagine 85, asparagine 131, asparagine 143, asparagine 191, asparagine 243, and asparagine 303 each carry an N-linked (GlcNAc...) asparagine glycan. Cysteines 213 and 270 form a disulfide. 5 consecutive Fibronectin type-III domains span residues 332-434 (PPDI…VYPR), 435-534 (IPTS…TEAI), 538-629 (GPDT…IPND), 627-719 (PNDD…IGYI), and 724-833 (PIVA…KENS). Cysteine 341 and cysteine 351 are oxidised to a cystine. Residues asparagine 366, asparagine 390, asparagine 407, asparagine 426, asparagine 445, asparagine 471, asparagine 481, and asparagine 489 are each glycosylated (N-linked (GlcNAc...) asparagine). Residues cysteine 466 and cysteine 511 are joined by a disulfide bond. The short motif at 519–523 (WSKWS) is the WSXWS motif element. Residues asparagine 572, asparagine 652, asparagine 663, asparagine 680, asparagine 729, and asparagine 787 are each glycosylated (N-linked (GlcNAc...) asparagine). A helical membrane pass occupies residues 834 to 854 (VGLIIAILIPVAVAVIVGVVT). Over 855 to 1097 (SILCYRKREW…TNFFQNKPND (243 aa)) the chain is Cytoplasmic. Positions 869–877 (FYPDIPNPE) match the Box 1 motif motif. A Phosphoserine modification is found at serine 927. 2 disordered regions span residues 982 to 1005 (QPQAKPEEEQENDPVGGAGYKPQM) and 1022 to 1097 (LDKA…KPND). Polar residues-rich tracts occupy residues 1032–1067 (ANVNTWNLVSPDSPRSTDSNSEIVSFGSPCSINSRQ) and 1086–1097 (SFTNFFQNKPND). Phosphoserine is present on serine 1044.

It belongs to the type I cytokine receptor family. Type 2 subfamily. As to quaternary structure, heterodimer composed of LIFR and IL6ST. The heterodimer formed by LIFR and IL6ST interacts with the complex formed by CNTF and CNTFR.

It is found in the cell membrane. Functionally, signal-transducing molecule. May have a common pathway with IL6ST. The soluble form inhibits the biological activity of LIF by blocking its binding to receptors on target cells. This Canis lupus familiaris (Dog) protein is Leukemia inhibitory factor receptor (LIFR).